The primary structure comprises 392 residues: Protein FAM53C (392 aa).

M1 is modified (N-acetylmethionine). A disordered region spans residues 76-120 (LHLRPPSPGSSPQEQSLSQVLSPEPPDPEKLPVPPAPPSKRHCRS). Low complexity predominate over residues 85-97 (SSPQEQSLSQVLS). Phosphoserine is present on residues S122 and S162. Disordered stretches follow at residues 141 to 167 (LWTP…PKRV) and 201 to 294 (DSSH…EDPR). The span at 201–215 (DSSHPSAASPQSGSW) shows a compositional bias: polar residues. S232, S234, S255, and S273 each carry phosphoserine. The span at 241 to 256 (ASRFLPSARSSPASSP) shows a compositional bias: low complexity. The span at 278–294 (LDARKAGVKRRHEEDPR) shows a compositional bias: basic and acidic residues. Phosphoserine is present on S299.

The protein belongs to the FAM53 family.

This chain is Protein FAM53C, found in Bos taurus (Bovine).